The primary structure comprises 376 residues: Cytochrome b-c1 complex subunit 2, mitochondrial (376 aa).

The transit peptide at 1–16 (MLSRVSARSYSSAAQS) directs the protein to the mitochondrion.

This sequence belongs to the peptidase M16 family. UQCRC2/QCR2 subfamily. Component of the ubiquinol-cytochrome c oxidoreductase (cytochrome b-c1 complex, complex III, CIII), a multisubunit enzyme composed of 3 respiratory subunits cytochrome b, cytochrome c1 and Rieske protein, 2 core protein subunits, and additional low-molecular weight protein subunits. The complex exists as an obligatory dimer and forms supercomplexes (SCs) in the inner mitochondrial membrane with cytochrome c oxidase (complex IV, CIV).

It is found in the mitochondrion inner membrane. Component of the ubiquinol-cytochrome c oxidoreductase, a multisubunit transmembrane complex that is part of the mitochondrial electron transport chain which drives oxidative phosphorylation. The respiratory chain contains 3 multisubunit complexes succinate dehydrogenase (complex II, CII), ubiquinol-cytochrome c oxidoreductase (cytochrome b-c1 complex, complex III, CIII) and cytochrome c oxidase (complex IV, CIV), that cooperate to transfer electrons derived from NADH and succinate to molecular oxygen, creating an electrochemical gradient over the inner membrane that drives transmembrane transport and the ATP synthase. The cytochrome b-c1 complex catalyzes electron transfer from ubiquinol to cytochrome c, linking this redox reaction to translocation of protons across the mitochondrial inner membrane, with protons being carried across the membrane as hydrogens on the quinol. In the process called Q cycle, 2 protons are consumed from the matrix, 4 protons are released into the intermembrane space and 2 electrons are passed to cytochrome c. The sequence is that of Cytochrome b-c1 complex subunit 2, mitochondrial (QCR2) from Debaryomyces hansenii (strain ATCC 36239 / CBS 767 / BCRC 21394 / JCM 1990 / NBRC 0083 / IGC 2968) (Yeast).